A 39-amino-acid chain; its full sequence is Photosystem II reaction center protein Y (39 aa).

Residues 7–25 (LLIVLLPILAAAGWAVFNI) form a helical membrane-spanning segment.

The protein belongs to the PsbY family. In terms of assembly, PSII is composed of 1 copy each of membrane proteins PsbA, PsbB, PsbC, PsbD, PsbE, PsbF, PsbH, PsbI, PsbJ, PsbK, PsbL, PsbM, PsbT, PsbX, PsbY, PsbZ, Psb30/Ycf12, peripheral proteins PsbO, CyanoQ (PsbQ), PsbU, PsbV and a large number of cofactors. It forms dimeric complexes.

It localises to the cellular thylakoid membrane. Loosely associated component of the core of photosystem II (PSII), it is not always seen in crystals. PSII is a light-driven water plastoquinone oxidoreductase, using light energy to abstract electrons from H(2)O, generating a proton gradient subsequently used for ATP formation. The sequence is that of Photosystem II reaction center protein Y from Trichodesmium erythraeum (strain IMS101).